Consider the following 75-residue polypeptide: Putative membrane protein insertion efficiency factor (75 aa).

This sequence belongs to the UPF0161 family.

It is found in the cell membrane. Could be involved in insertion of integral membrane proteins into the membrane. The chain is Putative membrane protein insertion efficiency factor from Bacillus cytotoxicus (strain DSM 22905 / CIP 110041 / 391-98 / NVH 391-98).